The sequence spans 181 residues: MSKAIKQNLADSKKMSAELFCLTYGAMVTEMLKDYEDPKDVTVQLDKMGFNMGTRLADDFLAKNANVPRCVDTRQIADVLCRNAIPCYLGVSATASSWSSGDREFIITLESNPLTELVQVPPNLVSAGLSYSQMIAGAIRGALEAVHFKVYASAADSGANTEIRIRFDQVLKDSLPAGEDD.

A lipid anchor (S-palmitoyl cysteine) is attached at Cys70.

Belongs to the TRAPP small subunits family. BET3 subfamily. As to quaternary structure, homodimer. Part of the multisubunit TRAPP (transport protein particle) complex.

It is found in the golgi apparatus. It localises to the cis-Golgi network. Its subcellular location is the endoplasmic reticulum. Functionally, may play a role in vesicular transport from endoplasmic reticulum to Golgi. Required for the systemic spread of the RNAi response. The chain is Trafficking protein particle complex subunit 3 homolog from Caenorhabditis briggsae.